A 268-amino-acid chain; its full sequence is uncharacterized protein (268 aa).

It belongs to the glycosyltransferase 2 family.

This is an uncharacterized protein from Bacillus subtilis (strain 168).